A 341-amino-acid polypeptide reads, in one-letter code: Glycerol-3-phosphate dehydrogenase [NAD(P)+] 1 (341 aa).

S11, W12, R32, R33, and K106 together coordinate NADPH. Residues K106, G137, and S139 each coordinate sn-glycerol 3-phosphate. An NADPH-binding site is contributed by A141. Sn-glycerol 3-phosphate is bound by residues K192, D245, S255, R256, and N257. K192 serves as the catalytic Proton acceptor. R256 is an NADPH binding site. NADPH is bound by residues V280 and E282.

It belongs to the NAD-dependent glycerol-3-phosphate dehydrogenase family.

The protein resides in the cytoplasm. The enzyme catalyses sn-glycerol 3-phosphate + NAD(+) = dihydroxyacetone phosphate + NADH + H(+). It carries out the reaction sn-glycerol 3-phosphate + NADP(+) = dihydroxyacetone phosphate + NADPH + H(+). Its pathway is membrane lipid metabolism; glycerophospholipid metabolism. Functionally, catalyzes the reduction of the glycolytic intermediate dihydroxyacetone phosphate (DHAP) to sn-glycerol 3-phosphate (G3P), the key precursor for phospholipid synthesis. The polypeptide is Glycerol-3-phosphate dehydrogenase [NAD(P)+] 1 (Salinibacter ruber (strain DSM 13855 / M31)).